Here is a 22-residue protein sequence, read N- to C-terminus: Caerin-3.3 (22 aa).

At Lys-22 the chain carries Lysine amide.

In terms of tissue distribution, expressed by the skin parotoid and/or rostral glands.

The protein localises to the secreted. In terms of biological role, antibacterial peptide, that adopts an alpha helical conformation which can disrupt bacterial membranes. Each caerin displays a different antimicrobial specificity. This is Caerin-3.3 from Ranoidea caerulea (Green tree frog).